The sequence spans 628 residues: Kelch-like protein diablo (628 aa).

A disordered region spans residues 1 to 56 (MGDLPGSTGGGSGPAAAGNASGNSSSAGNTGLGVAGTTGVDRPPSPARLSHTSEKH). Low complexity predominate over residues 14 to 29 (PAAAGNASGNSSSAGN). Positions 74–141 (CDVVLNVGGR…CYTAHIIVEE (68 aa)) constitute a BTB domain. Positions 176–278 (CLGIRAFADT…SPKFLVGTVG (103 aa)) constitute a BACK domain. Kelch repeat units lie at residues 325 to 371 (VLFA…VLND), 373 to 419 (LYAV…VLDG), 420 to 466 (FLYA…VLGG), 468 to 513 (LYAI…VFNN), 515 to 560 (IYAV…VVNG), and 561 to 607 (QLYA…VMRA).

It participates in protein modification; protein ubiquitination. Functionally, probable substrate-specific adapter of an E3 ubiquitin-protein ligase complex which mediates the ubiquitination and subsequent proteasomal degradation of target proteins. May have a role in synapse differentiation and growth. The sequence is that of Kelch-like protein diablo from Drosophila persimilis (Fruit fly).